The sequence spans 159 residues: Riboflavin kinase (159 aa).

38–43 serves as a coordination point for CDP; that stretch reads GLGEGR. Residues T67 and N69 each contribute to the Mg(2+) site. FMN contacts are provided by T126 and E134. 139–142 contributes to the CDP binding site; it reads HKLR.

This sequence belongs to the archaeal riboflavin kinase family. The cofactor is Mg(2+).

The catalysed reaction is riboflavin + CTP = CDP + FMN + H(+). The protein operates within cofactor biosynthesis; FMN biosynthesis; FMN from riboflavin (CTP route): step 1/1. Functionally, catalyzes the CTP-dependent phosphorylation of riboflavin (vitamin B2) to form flavin mononucleotide (FMN). This is Riboflavin kinase from Sulfolobus acidocaldarius (strain ATCC 33909 / DSM 639 / JCM 8929 / NBRC 15157 / NCIMB 11770).